Here is a 205-residue protein sequence, read N- to C-terminus: UPF0688 protein C1orf174 homolog (205 aa).

Residues 1–18 show a composition bias toward basic residues; it reads MRKRKLSDRVRCSARLKN. 2 disordered regions span residues 1 to 128 and 184 to 205; these read MRKR…PSKV and AKEE…EGNI. Residues 46–63 show a composition bias toward basic and acidic residues; the sequence is NTDKKSPKKLENDEKGLM. Residues 71–108 are compositionally biased toward polar residues; the sequence is INKTDNTASNESNAGNVNTCPSASPFSDLNEVSRNGLT. Residues 187–196 show a composition bias toward acidic residues; sequence EEEDDDDDYA.

Belongs to the UPF0688 family.

It is found in the nucleus. This is UPF0688 protein C1orf174 homolog from Xenopus laevis (African clawed frog).